A 73-amino-acid chain; its full sequence is Tetrahydromethanopterin S-methyltransferase subunit F (73 aa).

Residues I52–F72 form a helical membrane-spanning segment.

It belongs to the MtrF family. As to quaternary structure, the complex is composed of 8 subunits; MtrA, MtrB, MtrC, MtrD, MtrE, MtrF, MtrG and MtrH.

It localises to the cell membrane. The enzyme catalyses 5-methyl-5,6,7,8-tetrahydromethanopterin + coenzyme M + 2 Na(+)(in) = 5,6,7,8-tetrahydromethanopterin + methyl-coenzyme M + 2 Na(+)(out). Its pathway is one-carbon metabolism; methanogenesis from CO(2); methyl-coenzyme M from 5,10-methylene-5,6,7,8-tetrahydromethanopterin: step 2/2. In terms of biological role, part of a complex that catalyzes the formation of methyl-coenzyme M and tetrahydromethanopterin from coenzyme M and methyl-tetrahydromethanopterin. This is an energy-conserving, sodium-ion translocating step. In Methanosarcina barkeri (strain Fusaro / DSM 804), this protein is Tetrahydromethanopterin S-methyltransferase subunit F.